Consider the following 548-residue polypeptide: MAAKDVKFGNDARVKMLRGVNVLADAVKVTLGPKGRNVVLDKSFGAPTITKDGVSVAREIELEDKFENMGAQMVKEVASKANDAAGDGTTTATVLAQAIILKVMKAVAAGMNPMDLKRGIDKAVTVAVEELKALSVPCSDSKAIAQVGTISANSDETVGKLIAEAMDKVGKEGVITVEDGTGLQDELDVVEGMQFDRGYLSPYFINKPETGAVELESPFILLADKKISNIREMLPVLEAVAKAGKPLLIIAEDVEGEALATLVVNTMRGIVKVAAVKAPGFGDRRKAMLQDIATLTGGTVISEEIGMELEKATLEDLGQAKRVVINKDTTTIIDGVGEEAAIQGRVAQIRQQIEEATSDYDREKLQERVAKLAGGVAVIKVGAATEVEMKEKKARVEDALHATRAAVEEGVVAGGGVALIRVASKLADLRGQNEDQNVGIKVALRAMEAPLRQIVLNCGEEPSVVANTVKGGDGNYGYNAVXRRIRQHDRHGYPGSNQITRSALQYAASVAGLMITTECMVTDLPKNDAADLGAAGGMGGMGGMGGMM.

ATP is bound by residues 30 to 33, Lys51, 87 to 91, Gly415, and 479 to 481; these read TLGP, DGTTT, and NAV.

It belongs to the chaperonin (HSP60) family. In terms of assembly, forms a cylinder of 14 subunits composed of two heptameric rings stacked back-to-back. Interacts with the co-chaperonin GroES.

The protein resides in the cytoplasm. It catalyses the reaction ATP + H2O + a folded polypeptide = ADP + phosphate + an unfolded polypeptide.. Functionally, together with its co-chaperonin GroES, plays an essential role in assisting protein folding. The GroEL-GroES system forms a nano-cage that allows encapsulation of the non-native substrate proteins and provides a physical environment optimized to promote and accelerate protein folding. The chain is Chaperonin GroEL from Stenotrophomonas maltophilia (Pseudomonas maltophilia).